Reading from the N-terminus, the 212-residue chain is MAVGLLGTKLGMTQIFEEESGLAIPVTVVQAGPCTITQIKTAETDGYSAIQIGYLEVKEKALTKPELGHLKKVEASPLRHLKEYRVDDTATYTLGEAVKADIFNAGDLVDIAGTSMGRGFAGYQKRHNFKRGSMTHGSKNHRLPGSTGAGTTPGRVYPGKKMAGQYGAVKTTTRHLQVVRVDAERNLLLIKGAVPGKPGGLLNITPAKIVGK.

The interval 133–156 (SMTHGSKNHRLPGSTGAGTTPGRV) is disordered.

This sequence belongs to the universal ribosomal protein uL3 family. Part of the 50S ribosomal subunit. Forms a cluster with proteins L14 and L19.

Functionally, one of the primary rRNA binding proteins, it binds directly near the 3'-end of the 23S rRNA, where it nucleates assembly of the 50S subunit. The chain is Large ribosomal subunit protein uL3 from Crocosphaera subtropica (strain ATCC 51142 / BH68) (Cyanothece sp. (strain ATCC 51142)).